Reading from the N-terminus, the 310-residue chain is Leucine carboxyl methyltransferase 1 (310 aa).

Residues R50, G75, D100, 145 to 146 (DI), and E169 contribute to the S-adenosyl-L-methionine site.

The protein belongs to the methyltransferase superfamily. LCMT family.

It carries out the reaction [phosphatase 2A protein]-C-terminal L-leucine + S-adenosyl-L-methionine = [phosphatase 2A protein]-C-terminal L-leucine methyl ester + S-adenosyl-L-homocysteine. In terms of biological role, methylates the carboxyl group of the C-terminal leucine residue of protein phosphatase 2A catalytic subunits to form alpha-leucine ester residues. This chain is Leucine carboxyl methyltransferase 1 (ppm1), found in Schizosaccharomyces pombe (strain 972 / ATCC 24843) (Fission yeast).